The following is a 100-amino-acid chain: Urease subunit gamma (100 aa).

This sequence belongs to the urease gamma subunit family. In terms of assembly, heterotrimer of UreA (gamma), UreB (beta) and UreC (alpha) subunits. Three heterotrimers associate to form the active enzyme.

It localises to the cytoplasm. It catalyses the reaction urea + 2 H2O + H(+) = hydrogencarbonate + 2 NH4(+). It functions in the pathway nitrogen metabolism; urea degradation; CO(2) and NH(3) from urea (urease route): step 1/1. In Stutzerimonas stutzeri (strain A1501) (Pseudomonas stutzeri), this protein is Urease subunit gamma.